A 313-amino-acid polypeptide reads, in one-letter code: Dehydrogenase/reductase SDR family member 1 (313 aa).

Ile19 provides a ligand contact to NAD(+). The residue at position 21 (Arg21) is an Omega-N-methylarginine. An NAD(+)-binding site is contributed by Asp64. Ser151 provides a ligand contact to substrate. The NAD(+) site is built by Tyr163, Lys167, and Thr198. Catalysis depends on Tyr163, which acts as the Proton acceptor.

Belongs to the short-chain dehydrogenases/reductases (SDR) family.

Its subcellular location is the endoplasmic reticulum. The catalysed reaction is 17alpha-estradiol + NADP(+) = estrone + NADPH + H(+). The enzyme catalyses testosterone + NADP(+) = androst-4-ene-3,17-dione + NADPH + H(+). It catalyses the reaction prostaglandin E1 + NADPH + H(+) = prostaglandin F1 + NADP(+). It carries out the reaction isatin + NADPH + H(+) = 3-hydroxyindolin-2-one + NADP(+). NADPH-dependent oxidoreductase which catalyzes the reduction of some steroids (estrone, androstene-3,17-dione and cortisone) as well as prostaglandin E1, isatin and xenobiotics in vitro. May have a role in steroid and/or xenobiotic metabolism. This is Dehydrogenase/reductase SDR family member 1 from Mus musculus (Mouse).